Consider the following 2439-residue polypeptide: Mucin-6 (2439 aa).

The first 22 residues, 1–22 (MVQRWLLLSCCGALLSAGLANT), serve as a signal peptide directing secretion. Residues 43–214 (GQCSTWGAGH…KLDDPGEICT (172 aa)) enclose the VWFD 1 domain. Intrachain disulfides connect Cys-45–Cys-176 and Cys-67–Cys-213. Asn-268 carries N-linked (GlcNAc...) asparagine glycosylation. One can recognise a TIL domain in the interval 302–357 (CPANQVYQECGSACVKTCSNPQHSCSSSCTFGCFCPEGTVLNDLSNNHTCVPVTQC). The 185-residue stretch at 395–579 (GHCSLEGGSF…ALERETDPCS (185 aa)) folds into the VWFD 2 domain. 2 cysteine pairs are disulfide-bonded: Cys-397–Cys-533 and Cys-419–Cys-578. 2 N-linked (GlcNAc...) asparagine glycosylation sites follow: Asn-486 and Asn-659. Residues 866-1038 (STCTLYGEGH…NSWKESPLCG (173 aa)) enclose the VWFD 3 domain. Intrachain disulfides connect Cys-868/Cys-1002, Cys-890/Cys-1037, Cys-899/Cys-999, and Cys-917/Cys-924. Residues Asn-975 and Asn-1179 are each glycosylated (N-linked (GlcNAc...) asparagine). Disordered regions lie at residues 1202–1455 (PQPP…TSLV), 1471–1626 (ATSA…LVTP), 1642–1834 (SASI…HPHT), 1868–1983 (SIHS…STGP), 2033–2077 (ATSA…THSS), 2090–2196 (SSSW…SASP), 2233–2278 (VSPT…SLTT), and 2323–2348 (LTAH…SPGV). Residues 1224 to 1265 (TGTSTTIGLLSSTGPSPSSNHTPASPTQTPLLPATLTSSKPT) are compositionally biased toward low complexity. Over residues 1276-1286 (TAVTPQATSGL) the composition is skewed to polar residues. Over residues 1294-1339 (STATKPTVTQATTRATASTASPATTSTAQSTTRTTMTLPTPATSGT) the composition is skewed to low complexity. The segment covering 1340–1351 (SPTLPKSTNQEL) has biased composition (polar residues). Low complexity-rich tracts occupy residues 1352–1373 (PGTT…TGPT) and 1381–1415 (TRPT…AGSP). 3 stretches are compositionally biased toward polar residues: residues 1416-1455 (VPST…TSLV), 1471-1481 (ATSASNHSAPT), and 1490-1520 (LKAT…STNK). 2 stretches are compositionally biased toward low complexity: residues 1521–1567 (TPTS…ATSS) and 1574–1611 (TTHS…PQTT). The 1; truncated repeat unit spans residues 1561-1738 (TNSATSSRPP…TTSGTSQSRS (178 aa)). The segment at 1607 to 1953 (HPQTTLPTHV…STGTRTPVAH (347 aa)) is approximate repeats. The span at 1659 to 1686 (LKATGSTHTAPTMTLTTSGTSQALSSLN) shows a compositional bias: polar residues. The segment covering 1687–1768 (TAKTSTSLHS…PEVTSTSTTS (82 aa)) has biased composition (low complexity). Polar residues predominate over residues 1769–1793 (ITPNHTSTGTRTPVAHTTSATSSRL). The stretch at 1785-1953 (TTSATSSRLP…STGTRTPVAH (169 aa)) is repeat 2. 2 stretches are compositionally biased toward low complexity: residues 1794–1834 (PTPF…HPHT) and 1891–1917 (TAPP…TSTS). Polar residues predominate over residues 1918–1962 (LPYHTSSTHHPEVTPTSTTNITPKHTSTGTRTPVAHTTSASSSRL). Positions 1963–1983 (PTPFTTHSPPTGSSPFSSTGP) are enriched in low complexity. Over residues 2052–2070 (LKATGSTHTAPPMTVTTSG) the composition is skewed to polar residues. Low complexity predominate over residues 2090–2102 (SSSWLPQNSSSRP). Over residues 2107 to 2120 (ITTQLPHLSSATTP) the composition is skewed to polar residues. The span at 2121–2196 (VSTTNQLSSS…PTTASVSASP (76 aa)) shows a compositional bias: low complexity. The span at 2240–2264 (HLASSTIAFPSTPRTTASTHTAPAF) shows a compositional bias: polar residues. A compositionally biased stretch (low complexity) spans 2265–2278 (SSQSTTSRSTSLTT). Residues 2323–2347 (LTAHGSTPASAPVSSLGTPTPTSPG) show a composition bias toward polar residues. Intrachain disulfides connect Cys-2349/Cys-2396, Cys-2363/Cys-2410, Cys-2372/Cys-2430, and Cys-2376/Cys-2432. Residues 2349–2438 (CSVREQQEEI…HCVCSSVACG (90 aa)) enclose the CTCK domain.

In terms of assembly, multimer; disulfide-linked. Post-translationally, O-glycosylated. As to expression, expressed in the regenerative zone of gastric antrum, gastric body mucosa and gastric incisura mucosa. Expressed in the deeper mucous glands of gastric antrum. Overexpressed in Helicobacter pylori infected gastric epithelium. Highly expressed in duodenal Brunner's glands, gall bladder, seminal vesicle, pancreatic centroacinar cells and ducts, and periductal glands of the common bile duct.

Its subcellular location is the secreted. Functionally, may provide a mechanism for modulation of the composition of the protective mucus layer related to acid secretion or the presence of bacteria and noxious agents in the lumen. Plays an important role in the cytoprotection of epithelial surfaces and are used as tumor markers in a variety of cancers. May play a role in epithelial organogenesis. The sequence is that of Mucin-6 (MUC6) from Homo sapiens (Human).